A 69-amino-acid polypeptide reads, in one-letter code: Calcium-binding protein (69 aa).

2 EF-hand domains span residues 2-37 and 38-69; these read VNRTEAAQLLKHLDRDKSGKISSQELMEFLHTVNCP and FKKEQVEKFIKQHDKDGDGQLNTDELLDVLCS. D15, D17, S19, K21, E26, D51, D53, D55, Q57, and E62 together coordinate Ca(2+).

This is Calcium-binding protein from Schistosoma mansoni (Blood fluke).